Reading from the N-terminus, the 462-residue chain is Zinc transporter zipt-7.2 (462 aa).

Residues L2–L22 traverse the membrane as a helical segment. The tract at residues H39–A134 is disordered. The segment covering H40–G51 has biased composition (basic residues). Residues A65–A74 show a composition bias toward low complexity. Basic and acidic residues predominate over residues A75–H94. Basic residues predominate over residues H111–H120. Basic and acidic residues predominate over residues S121 to E132. The chain crosses the membrane as a helical span at residues A161–I181. The N-linked (GlcNAc...) asparagine glycan is linked to N184. The helical transmembrane segment at V194 to H214 threads the bilayer. The tract at residues G219–H239 is disordered. Residues M244–V264 form a helical membrane-spanning segment. The tract at residues E270–D307 is disordered. Over residues H281–D307 the composition is skewed to basic and acidic residues. Residue N326 is glycosylated (N-linked (GlcNAc...) asparagine). Helical transmembrane passes span I333–V353, A376–F396, and S410–P430. N435 carries N-linked (GlcNAc...) asparagine glycosylation. A helical membrane pass occupies residues T441–Y461.

This sequence belongs to the ZIP transporter (TC 2.A.5) family. KE4/Catsup subfamily. As to expression, expressed in somatic tissues.

Its subcellular location is the membrane. Functionally, zinc transporter. The protein is Zinc transporter zipt-7.2 of Caenorhabditis elegans.